A 279-amino-acid polypeptide reads, in one-letter code: Pantothenate synthetase (279 aa).

26-33 is a binding site for ATP; sequence MGNLHDGH. The Proton donor role is filled by histidine 33. Residue glutamine 57 coordinates (R)-pantoate. Glutamine 57 serves as a coordination point for beta-alanine. Residue 144–147 coordinates ATP; the sequence is GKKD. Glutamine 150 provides a ligand contact to (R)-pantoate. Position 181–184 (181–184) interacts with ATP; the sequence is LSSR.

This sequence belongs to the pantothenate synthetase family. As to quaternary structure, homodimer.

Its subcellular location is the cytoplasm. It carries out the reaction (R)-pantoate + beta-alanine + ATP = (R)-pantothenate + AMP + diphosphate + H(+). It participates in cofactor biosynthesis; (R)-pantothenate biosynthesis; (R)-pantothenate from (R)-pantoate and beta-alanine: step 1/1. Functionally, catalyzes the condensation of pantoate with beta-alanine in an ATP-dependent reaction via a pantoyl-adenylate intermediate. This Herminiimonas arsenicoxydans protein is Pantothenate synthetase.